The primary structure comprises 191 residues: Thymidylate kinase (191 aa).

7-14 (GVDGAGKS) contacts ATP.

It belongs to the thymidylate kinase family.

The catalysed reaction is dTMP + ATP = dTDP + ADP. Phosphorylation of dTMP to form dTDP in both de novo and salvage pathways of dTTP synthesis. The polypeptide is Thymidylate kinase (Helicobacter pylori (strain Shi470)).